The sequence spans 285 residues: Glutamate racemase (285 aa).

Substrate-binding positions include 30–31 and 62–63; these read DS and YG. Residue Cys94 is the Proton donor/acceptor of the active site. Residue 95-96 coordinates substrate; it reads NT. Residue Cys206 is the Proton donor/acceptor of the active site. 207–208 contacts substrate; the sequence is TH.

This sequence belongs to the aspartate/glutamate racemases family.

It catalyses the reaction L-glutamate = D-glutamate. It participates in cell wall biogenesis; peptidoglycan biosynthesis. Functionally, provides the (R)-glutamate required for cell wall biosynthesis. This Pectobacterium carotovorum subsp. carotovorum (strain PC1) protein is Glutamate racemase.